The following is a 192-amino-acid chain: Thiosulfate reductase electron transfer subunit PhsB (192 aa).

4Fe-4S ferredoxin-type domains follow at residues 8–36 (YVMLHDEKRCIGCQACTVACKVLNDVPEG), 55–86 (THFQFVRVSCQHCENAPCVSVCPTGASYRDEN), and 87–116 (GIVQVDKSRCIGCDYCVAACPFHVRYLNPQ). Positions 17, 20, 23, 27, 64, 67, 72, 76, 96, 99, 102, 106, 123, 126, 139, and 143 each coordinate [4Fe-4S] cluster.

As to quaternary structure, composed of three subunits: PhsA, PhsB and PhsC. [4Fe-4S] cluster serves as cofactor.

The protein localises to the cell inner membrane. Its function is as follows. Component of the PhsABC thiosulfate reductase that catalyzes the reduction of thiosulfate to sulfite and hydrogen sulfide, with menaquinol as the sole electron donor. Proton motive force (PMF) is required to drive transmembrane electron transfer within the reductase. The PhsB subunit transfers electrons between PhsC and PhsA. The sequence is that of Thiosulfate reductase electron transfer subunit PhsB (phsB) from Salmonella typhi.